Here is a 936-residue protein sequence, read N- to C-terminus: Aconitate hydratase A (936 aa).

A disordered region spans residues 401-449 (VTPDFDAEGPATENTSAQTAGTPASAADAKGNIPSAAAGAEGRPSNPVT). The segment covering 412–422 (TENTSAQTAGT) has biased composition (polar residues). 3 residues coordinate [4Fe-4S] cluster: C472, C538, and C541.

The protein belongs to the aconitase/IPM isomerase family. In terms of assembly, monomer. Requires [4Fe-4S] cluster as cofactor.

The catalysed reaction is citrate = D-threo-isocitrate. The enzyme catalyses (2S,3R)-3-hydroxybutane-1,2,3-tricarboxylate = 2-methyl-cis-aconitate + H2O. Its pathway is carbohydrate metabolism; tricarboxylic acid cycle; isocitrate from oxaloacetate: step 2/2. It participates in organic acid metabolism; propanoate degradation. Its function is as follows. Involved in the catabolism of short chain fatty acids (SCFA) via the tricarboxylic acid (TCA)(acetyl degradation route) and probably via the 2-methylcitrate cycle I (propionate degradation route). Catalyzes the reversible isomerization of citrate to isocitrate via cis-aconitate. Could catalyze the hydration of 2-methyl-cis-aconitate to yield (2R,3S)-2-methylisocitrate. The apo form of AcnA functions as a RNA-binding regulatory protein. The protein is Aconitate hydratase A (acn) of Corynebacterium jeikeium (strain K411).